Reading from the N-terminus, the 510-residue chain is Zinc metalloproteinase (510 aa).

Positions 1–24 are cleaved as a signal peptide; that stretch reads MKSKLICIIMVIAFQAHFTMTVKA. The propeptide occupies 25–200; it reads DSVGEEKLQN…ILKKQNMLSE (176 aa). Residue His349 participates in Zn(2+) binding. The active site involves Glu350. 2 residues coordinate Zn(2+): His353 and Glu373. The active-site Proton donor is the His437.

The protein belongs to the peptidase M4 family. The cofactor is Zn(2+).

The protein localises to the secreted. Its function is as follows. Probably linked to the pathogenesis of listerial infection. This Listeria monocytogenes serovar 1/2a (strain ATCC BAA-679 / EGD-e) protein is Zinc metalloproteinase (mpl).